The primary structure comprises 196 residues: FAD-linked sulfhydryl oxidase ERV2 (196 aa).

Residues 1 to 12 (MKQIVKRSHAIR) lie on the Cytoplasmic side of the membrane. A helical; Signal-anchor membrane pass occupies residues 13–35 (IVAALGIIGLWMFFSSNELSIAT). At 36-196 (PGLIKAKSGI…SLEKEAKQHG (161 aa)) the chain is on the lumenal side. The ERV/ALR sulfhydryl oxidase domain occupies 72–174 (MGDDKVKKEV…YDCATILEDY (103 aa)). FAD is bound by residues Lys78, Arg83, and Trp86. An intrachain disulfide couples Cys121 to Cys124. FAD contacts are provided by His127, Cys150, His153, Asn157, Lys162, and Tyr174. Cysteines 150 and 167 form a disulfide. Cys176 and Cys178 are disulfide-bonded.

Homodimer. Interacts with the substrate protein PDI1, forming transient intermolecular disulfide bridges. The cofactor is FAD.

The protein resides in the endoplasmic reticulum membrane. The enzyme catalyses 2 R'C(R)SH + O2 = R'C(R)S-S(R)CR' + H2O2. Its function is as follows. FAD-dependent sulfhydryl oxidase that catalyzes disulfide bond formation in the endoplasmic reticulum lumen in parallel to ERO1. This is FAD-linked sulfhydryl oxidase ERV2 (ERV2) from Saccharomyces cerevisiae (strain ATCC 204508 / S288c) (Baker's yeast).